Here is a 404-residue protein sequence, read N- to C-terminus: Zinc metalloprotease Rip1 (404 aa).

A helical transmembrane segment spans residues 1 to 21 (MMFVTGIVLFALAILISVALH). H21 lines the Zn(2+) pocket. E22 is a catalytic residue. H25 contributes to the Zn(2+) binding site. Residues 104–124 (PGMNLAICLVLIYAIALVWGL) form a helical membrane-spanning segment. In terms of domain architecture, PDZ spans 121–203 (VWGLPNLHPP…SVPIVVERDG (83 aa)). D202 serves as a coordination point for Zn(2+). Helical transmembrane passes span 313–333 (LWVA…AINL) and 373–393 (LLPA…LTVT).

This sequence belongs to the peptidase M50B family. It depends on Zn(2+) as a cofactor.

Its subcellular location is the cell membrane. Its function is as follows. A probable site-2 protease (S2P) that cleaves type-2 transmembrane proteins within their membrane-spanning domains. Degrades anti-sigma factors RskA, RslA and RsmA, releasing sigma factors SigK, SigL and SigM from the cellular membrane, activating signaling pathways. Does not act on RsdA. Regulates the composition of extractable mycolic acids in the cell envelope in response to changes in membrane fluidity. Mediates transcriptional regulation of mycolic acid biosynthetic genes in response to detergent. Probably also cleaves PbpB (PBP3, FtsI); this cleavage is inhibited by Wag31-PbpBI interaction. Regulated intramembrane proteolysis (RIP) occurs when an extracytoplasmic signal (possibly oxidative stress) triggers a concerted proteolytic cascade to transmit information and elicit cellular responses. The membrane-spanning regulatory substrate protein (includes anti-sigma factors RskA, RslA, RsmA, and PbpB) is first cut extracytoplasmically (site-1 protease, S1P), then within the membrane itself (site-2 protease, S2P, this entry), while cytoplasmic proteases finish degrading the regulatory protein, liberating the effector protein (ECF sigma factors SigK, SigL and SigM). The protein is Zinc metalloprotease Rip1 (rip1) of Mycobacterium tuberculosis (strain ATCC 35801 / TMC 107 / Erdman).